We begin with the raw amino-acid sequence, 304 residues long: Small glutamine-rich tetratricopeptide repeat-containing protein beta (304 aa).

TPR repeat units follow at residues 15 to 49, 85 to 118, 119 to 152, and 153 to 186; these read LREQSQMDTYTSDEQESLEVAIQCLETVFKISPED, ADQLKDEGNNHMKEENYAAAVDCYTQAIELDPNN, AVYYCNRAAAQSKLGHYTDAIKDCEKAIAIDSKY, and SKAYGRMGLALTALNKFEEAVTSYQKALDLDPEN. The residue at position 131 (lysine 131) is an N6-acetyllysine. Phosphoserine occurs at positions 293, 295, and 297.

This sequence belongs to the SGT family. In terms of assembly, homooligomerize.

Co-chaperone that binds directly to HSC70 and HSP70 and regulates their ATPase activity. In Homo sapiens (Human), this protein is Small glutamine-rich tetratricopeptide repeat-containing protein beta (SGTB).